Here is a 305-residue protein sequence, read N- to C-terminus: Probable lipid kinase YegS-like (305 aa).

One can recognise a DAGKc domain in the interval 1-129 (MTQRRAMLIL…VDLGEVGGKL (129 aa)). Residues Thr39, 65 to 71 (GDGTLRD), and Thr92 contribute to the ATP site. The Mg(2+) site is built by Leu210, Asp213, and Leu215. Glu268 (proton acceptor) is an active-site residue.

It belongs to the diacylglycerol/lipid kinase family. YegS lipid kinase subfamily. The cofactor is Mg(2+). It depends on Ca(2+) as a cofactor.

The protein localises to the cytoplasm. Its function is as follows. Probably phosphorylates lipids; the in vivo substrate is unknown. In Pseudomonas syringae pv. syringae (strain B728a), this protein is Probable lipid kinase YegS-like.